A 279-amino-acid polypeptide reads, in one-letter code: Fatty acid metabolism regulator protein (279 aa).

One can recognise an HTH gntR-type domain in the interval 6 to 74 (KSPAGFAEKY…HGKPTKVNQF (69 aa)). Positions 34 to 53 (ERELSELIGVTRTTLREVLQ) form a DNA-binding region, H-T-H motif.

As to quaternary structure, homodimer.

Its subcellular location is the cytoplasm. Multifunctional regulator of fatty acid metabolism. This is Fatty acid metabolism regulator protein from Vibrio parahaemolyticus serotype O3:K6 (strain RIMD 2210633).